A 166-amino-acid polypeptide reads, in one-letter code: NAD(P)H-quinone oxidoreductase subunit I, chloroplastic (166 aa).

2 4Fe-4S ferredoxin-type domains span residues 55–84 (GRIHFEFDKCIACEVCVRVCPIDLPVVDWK) and 95–124 (LNYSIDFGICIFCGNCVEYCPTNCLSMTEE). Cys-64, Cys-67, Cys-70, Cys-74, Cys-104, Cys-107, Cys-110, and Cys-114 together coordinate [4Fe-4S] cluster.

Belongs to the complex I 23 kDa subunit family. NDH is composed of at least 16 different subunits, 5 of which are encoded in the nucleus. [4Fe-4S] cluster is required as a cofactor.

The protein resides in the plastid. The protein localises to the chloroplast thylakoid membrane. It carries out the reaction a plastoquinone + NADH + (n+1) H(+)(in) = a plastoquinol + NAD(+) + n H(+)(out). It catalyses the reaction a plastoquinone + NADPH + (n+1) H(+)(in) = a plastoquinol + NADP(+) + n H(+)(out). Its function is as follows. NDH shuttles electrons from NAD(P)H:plastoquinone, via FMN and iron-sulfur (Fe-S) centers, to quinones in the photosynthetic chain and possibly in a chloroplast respiratory chain. The immediate electron acceptor for the enzyme in this species is believed to be plastoquinone. Couples the redox reaction to proton translocation, and thus conserves the redox energy in a proton gradient. The polypeptide is NAD(P)H-quinone oxidoreductase subunit I, chloroplastic (Oxypappus scaber).